Reading from the N-terminus, the 235-residue chain is Retron Ec48 transmembrane protein (235 aa).

The next 2 membrane-spanning stretches (helical) occupy residues 11 to 31 (IVGVSSALFLIFSLISLFETI) and 64 to 84 (AFGWLITTFVTVFGVMIALMT).

It is found in the cell inner membrane. Functionally, membrane component of antiviral defense system Retron Ec48, composed of a non-coding RNA (ncRNA), a reverse transcriptase (RT) and this membrane protein. Expression of this retron confers protection against bacteriophages lambda, T2, T4, T5 and T7. At multiplicity of infection (MOI) of 0.02 cultures grow normally when infected with lambda without collapsing, at MOI 2 cultures enter growth stasis. At MOI 3 cell membranes are permeabilized within 15 minutes of infection but do not lyse, suggesting the phage are not able to finish a replication cycle. Antiviral defense is suppressed by mutations that knockout the lambda gam expression or phage T7 gp5.9 expression; both viral genes inhibit host RecBCD. The Ec48 retron may sense the integrity of the RecBCD enzyme; when RecBCD is perturbed by viral proteins the Ec48 effector (the membrane protein) is activated, leading to abortive infection and bacterial growth arrest. The sequence is that of Retron Ec48 transmembrane protein from Escherichia coli.